The primary structure comprises 395 residues: Fe(3+) ions import ATP-binding protein FbpC 2 (395 aa).

The segment at 1–21 (MHIAQELADETCNSPRGAGHA) is disordered. Residues 23 to 264 (LRYPSDRRTA…PKTLFVADFI (242 aa)) form the ABC transporter domain. 66–73 (GPSGCGKT) is a binding site for ATP.

It belongs to the ABC transporter superfamily. Fe(3+) ion importer (TC 3.A.1.10) family. The complex is composed of two ATP-binding proteins (FbpC), two transmembrane proteins (FbpB) and a solute-binding protein (FbpA).

It is found in the cell inner membrane. It carries out the reaction Fe(3+)(out) + ATP + H2O = Fe(3+)(in) + ADP + phosphate + H(+). Part of the ABC transporter complex FbpABC involved in Fe(3+) ions import. Responsible for energy coupling to the transport system. The protein is Fe(3+) ions import ATP-binding protein FbpC 2 of Rhizobium meliloti (strain 1021) (Ensifer meliloti).